The following is a 391-amino-acid chain: Oxygen-dependent coproporphyrinogen-III oxidase, chloroplastic (391 aa).

Positions 1-13 are enriched in polar residues; the sequence is MASSLLTTPSQTL. Residues 1–34 are disordered; that stretch reads MASSLLTTPSQTLAPNPAAARARRSSPAAAQVSF. Over residues 14 to 30 the composition is skewed to low complexity; the sequence is APNPAAARARRSSPAAA. The segment at 125 to 134 is important for dimerization; the sequence is VLQDGNVFEK. Ser179 is a substrate binding site. His193 functions as the Proton donor in the catalytic mechanism. Substrate contacts are provided by residues 195 to 197 and 349 to 354; these read NYR and GGRIES. Positions 331–366 are important for dimerization; that stretch reads YVEFNLVYDRGTTFGLKTGGRIESILVSLPLTARWE.

The protein belongs to the aerobic coproporphyrinogen-III oxidase family. Homodimer.

It localises to the plastid. Its subcellular location is the chloroplast. The enzyme catalyses coproporphyrinogen III + O2 + 2 H(+) = protoporphyrinogen IX + 2 CO2 + 2 H2O. It functions in the pathway porphyrin-containing compound metabolism; protoporphyrin-IX biosynthesis; protoporphyrinogen-IX from coproporphyrinogen-III (O2 route): step 1/1. Its function is as follows. Involved in the heme and chlorophyll biosynthesis. Catalyzes the aerobic oxidative decarboxylation of propionate groups of rings A and B of coproporphyrinogen-III to yield the vinyl groups in protoporphyrinogen-IX. In Hordeum vulgare (Barley), this protein is Oxygen-dependent coproporphyrinogen-III oxidase, chloroplastic (CPX).